The sequence spans 78 residues: Large ribosomal subunit protein bL28 (78 aa).

Positions 1–20 (MSRVCQVTGKGPVTGNNISH) are disordered.

Belongs to the bacterial ribosomal protein bL28 family.

The protein is Large ribosomal subunit protein bL28 of Pseudomonas putida (strain W619).